The following is a 303-amino-acid chain: Vesicle-trafficking protein SEC22c (303 aa).

Over 1 to 183 (MSLILFACVV…EPAPSFRMEP (183 aa)) the chain is Cytoplasmic. The region spanning 8–119 (CVVRVRDGLP…YAFLEFDNVI (112 aa)) is the Longin domain. Residues 184-204 (VTALGILSLILNIMCAALNLI) form a helical membrane-spanning segment. Residues 205–223 (RGIHLAEHSLQVAHEEIGN) lie on the Lumenal side of the membrane. A helical transmembrane segment spans residues 224-244 (ILAFLIPFVACIFQCYLYLFY). Residues 245-248 (SPAR) are Cytoplasmic-facing. The helical transmembrane segment at 249–269 (TMKVVLMLLFICLGNVYLHGL) threads the bilayer. Arg270 is a topological domain (lumenal). Residues 271–291 (NLWQILFHIGVAFLSSHQILT) form a helical membrane-spanning segment. Residues 292-303 (RQLQDKQSDCGV) lie on the Cytoplasmic side of the membrane.

The protein belongs to the synaptobrevin family.

The protein localises to the endoplasmic reticulum membrane. Functionally, may be involved in vesicle transport between the ER and the Golgi complex. This is Vesicle-trafficking protein SEC22c (SEC22C) from Bos taurus (Bovine).